The sequence spans 76 residues: Sec-independent protein translocase protein TatA (76 aa).

Residues 1-21 (MGSFSIWHWLIVLVIVALVFG) traverse the membrane as a helical segment. 2 stretches are compositionally biased toward basic and acidic residues: residues 39–50 (FKDGMKGEDDKP) and 64–76 (GTVD…KSNS). The disordered stretch occupies residues 39 to 76 (FKDGMKGEDDKPAAQNAAPSQVADKGTVDVEVKEKSNS).

The protein belongs to the TatA/E family. In terms of assembly, the Tat system comprises two distinct complexes: a TatABC complex, containing multiple copies of TatA, TatB and TatC subunits, and a separate TatA complex, containing only TatA subunits. Substrates initially bind to the TatABC complex, which probably triggers association of the separate TatA complex to form the active translocon.

The protein resides in the cell inner membrane. Part of the twin-arginine translocation (Tat) system that transports large folded proteins containing a characteristic twin-arginine motif in their signal peptide across membranes. TatA could form the protein-conducting channel of the Tat system. The protein is Sec-independent protein translocase protein TatA of Herminiimonas arsenicoxydans.